The chain runs to 115 residues: Superoxide reductase (115 aa).

The Fe cation site is built by Glu14, His16, His41, His47, Cys102, and His105.

This sequence belongs to the desulfoferrodoxin family. Homotetramer. Fe cation is required as a cofactor.

The catalysed reaction is reduced [rubredoxin] + superoxide + 2 H(+) = oxidized [rubredoxin] + H2O2. Its function is as follows. Uses electrons from reduced NADP, by way of rubredoxin and an oxidoreductase, to catalyze the reduction of superoxide to hydrogen peroxide. The sequence is that of Superoxide reductase (sorA) from Pyrococcus horikoshii (strain ATCC 700860 / DSM 12428 / JCM 9974 / NBRC 100139 / OT-3).